A 389-amino-acid polypeptide reads, in one-letter code: MAIGTPLLKGSIKFLLLGSGELGKEVVIEAQRLGIECIAVDRYQNAPAMQVAHKSYVIDMKDYDALMAIIEREEPDYIVPEIEAINTDALIDAEKMGYTVIPTAEATKITMNRELIRRLAAEKLGLKTAKYEFADSLEELRDAVEKLGLPCVVKPIMSSSGKGQSVVRSEEDIEKAWKIAKEGARGIGNRVIVEEFINFDYEITLLTARTAEGTKFCEPIGHVQIDGDYHESWQPHNMSAELKEQAQDIAKKVTDALGGYGIFGVELFVKGDEVIFSEVSPRPHDTGMVTMITQEMSEFEIHVRAILGLPVSTKLIHPGASHVIKAEINKYAPKYHIEDALKVPNTKLRLFGKPNAKVGRRMGVALAYADSVEKARELAEKCAHAVRIE.

Residues 21-22 (EL) and E81 contribute to the N(1)-(5-phospho-beta-D-ribosyl)glycinamide site. ATP is bound by residues R113, K154, 159–164 (SSGKGQ), 194–197 (EEFI), and E202. The ATP-grasp domain occupies 118 to 307 (RLAAEKLGLK…EFEIHVRAIL (190 aa)). Mg(2+) contacts are provided by E266 and E278. N(1)-(5-phospho-beta-D-ribosyl)glycinamide is bound by residues D285, K353, and 360 to 361 (RR).

This sequence belongs to the PurK/PurT family. As to quaternary structure, homodimer.

It catalyses the reaction N(1)-(5-phospho-beta-D-ribosyl)glycinamide + formate + ATP = N(2)-formyl-N(1)-(5-phospho-beta-D-ribosyl)glycinamide + ADP + phosphate + H(+). It participates in purine metabolism; IMP biosynthesis via de novo pathway; N(2)-formyl-N(1)-(5-phospho-D-ribosyl)glycinamide from N(1)-(5-phospho-D-ribosyl)glycinamide (formate route): step 1/1. Its function is as follows. Involved in the de novo purine biosynthesis. Catalyzes the transfer of formate to 5-phospho-ribosyl-glycinamide (GAR), producing 5-phospho-ribosyl-N-formylglycinamide (FGAR). Formate is provided by PurU via hydrolysis of 10-formyl-tetrahydrofolate. In Methanocaldococcus jannaschii (strain ATCC 43067 / DSM 2661 / JAL-1 / JCM 10045 / NBRC 100440) (Methanococcus jannaschii), this protein is Formate-dependent phosphoribosylglycinamide formyltransferase.